The following is a 463-amino-acid chain: 23S rRNA (uracil(1939)-C(5))-methyltransferase RlmD (463 aa).

Positions 6–76 (KSRKPQQPEY…KRLEEAEMVA (71 aa)) constitute a TRAM domain. [4Fe-4S] cluster is bound by residues Cys90, Cys96, Cys99, and Cys178. 6 residues coordinate S-adenosyl-L-methionine: Gln288, Phe317, Asn322, Glu341, Asp368, and Asp389. The Nucleophile role is filled by Cys415.

Belongs to the class I-like SAM-binding methyltransferase superfamily. RNA M5U methyltransferase family. RlmD subfamily.

The enzyme catalyses uridine(1939) in 23S rRNA + S-adenosyl-L-methionine = 5-methyluridine(1939) in 23S rRNA + S-adenosyl-L-homocysteine + H(+). Catalyzes the formation of 5-methyl-uridine at position 1939 (m5U1939) in 23S rRNA. The sequence is that of 23S rRNA (uracil(1939)-C(5))-methyltransferase RlmD from Acinetobacter baumannii (strain ACICU).